The chain runs to 471 residues: 3-isopropylmalate dehydratase large subunit (471 aa).

3 residues coordinate [4Fe-4S] cluster: cysteine 347, cysteine 407, and cysteine 410.

Belongs to the aconitase/IPM isomerase family. LeuC type 1 subfamily. As to quaternary structure, heterodimer of LeuC and LeuD. It depends on [4Fe-4S] cluster as a cofactor.

The enzyme catalyses (2R,3S)-3-isopropylmalate = (2S)-2-isopropylmalate. Its pathway is amino-acid biosynthesis; L-leucine biosynthesis; L-leucine from 3-methyl-2-oxobutanoate: step 2/4. Functionally, catalyzes the isomerization between 2-isopropylmalate and 3-isopropylmalate, via the formation of 2-isopropylmaleate. The protein is 3-isopropylmalate dehydratase large subunit of Geobacillus kaustophilus (strain HTA426).